Consider the following 347-residue polypeptide: Endophilin-A3 (347 aa).

Residues 1–21 form a membrane-binding amphipathic helix region; sequence MSVAGLKKQFHKASQLFSEKI. In terms of domain architecture, BAR spans 18–249; it reads SEKISGAEGT…LELRIALASQ (232 aa). The tract at residues 60–87 is required for dimerization upon membrane association; sequence PNPAYRAKLGMLNTMSKLRGQVKATGYP. Positions 180 to 201 form a coiled coil; that stretch reads EEEIRQAVEKFEESKELAERSM. Residues 218–254 are interaction with ARC; it reads FVEAALDYHRQSTEILQELQNKLELRIALASQVPRRD. The disordered stretch occupies residues 255-284; the sequence is YMPKPVNTSSTNANGVEPSSSSKLTGTDIP. Positions 260–284 are enriched in polar residues; sequence VNTSSTNANGVEPSSSSKLTGTDIP. In terms of domain architecture, SH3 spans 285 to 344; sequence SDQPCCRGLYDFEPENEGELGFKEGDIITLTNQIDENWYEGMLRGESGFFPINYVEVIVP.

This sequence belongs to the endophilin family. As to quaternary structure, interacts with SGIP1 and DYDC1. Interacts with FASLG. Interacts with ATXN2. Interacts with BIN2. Interacts with ARC, DNM1 and SYNJ1. Expressed at high level in testis and at lower level in brain and liver.

The protein localises to the cytoplasm. It localises to the early endosome membrane. Its function is as follows. Implicated in endocytosis. May recruit other proteins to membranes with high curvature. The protein is Endophilin-A3 (Sh3gl3) of Rattus norvegicus (Rat).